Here is a 374-residue protein sequence, read N- to C-terminus: Low-specificity L-threonine aldolase (374 aa).

At Lys213 the chain carries N6-(pyridoxal phosphate)lysine. The tract at residues 354–374 (HPHKDDGRNNKKMYSLDAIKK) is disordered.

The protein belongs to the threonine aldolase family. As to quaternary structure, homotetramer. Pyridoxal 5'-phosphate is required as a cofactor.

The enzyme catalyses L-threonine = acetaldehyde + glycine. The catalysed reaction is L-allo-threonine = acetaldehyde + glycine. It functions in the pathway amino-acid degradation; L-threonine degradation via aldolase pathway; acetaldehyde and glycine from L-threonine: step 1/1. The polypeptide is Low-specificity L-threonine aldolase (GLY1) (Candida albicans (Yeast)).